We begin with the raw amino-acid sequence, 64 residues long: Metallothionein-A (64 aa).

This sequence belongs to the metallothionein superfamily. Type 4 family.

Functionally, metallothioneins have a high content of cysteine residues that bind various heavy metals. The protein is Metallothionein-A (MTA) of Strongylocentrotus purpuratus (Purple sea urchin).